Here is a 684-residue protein sequence, read N- to C-terminus: Kelch repeat and BTB domain-containing protein 7 (684 aa).

Positions 1–27 are disordered; sequence MQSREDVPRSRRLASPRGGRRPKRISK. Residues 10–26 show a composition bias toward basic residues; it reads SRRLASPRGGRRPKRIS. Ser-29 is subject to Phosphoserine. The BTB domain maps to 63-138; it reads CDVTIEVVTP…CYTGRVSLSE (76 aa). 5 Kelch repeats span residues 386-435, 436-484, 486-523, 524-564, and 567-616; these read AVCV…YLNG, YIYI…VVQN, LYAVNSKRMLCYDPSHNMWLNCASLKRSDFQEACVFND, EIYC…IVNH, and KLLL…CLCA. Residues 630 to 666 are disordered; sequence ITEEDDARSESSTEWDLDGFSELDSESGSSSSFSDDE. A compositionally biased stretch (acidic residues) spans 631–654; sequence TEEDDARSESSTEWDLDGFSELDS. Residues 668–671 carry the ATG8 interaction motif (AIM) motif; sequence WVQV.

As to quaternary structure, core component of a BCR3 (BTB-CUL3-RBX1) E3 ubiquitin ligase complex, also named Cul3-RING ubiquitin ligase complex CUL3(KBTBD6/7), composed of CUL3, RBX1, KBTBD6 and KBTBD7. Interacts with GABARAP; the interaction is direct and is required for the ubiquitination of TIAM1. Interacts with GABARAPL1, GABARAPL2 and MAP1LC3B; the interaction is direct.

Its subcellular location is the cytoplasm. It is found in the nucleus. It participates in protein modification; protein ubiquitination. Its function is as follows. As part of the CUL3(KBTBD6/7) E3 ubiquitin ligase complex functions as a substrate adapter for the RAC1 guanine exchange factor (GEF) TIAM1, mediating its 'Lys-48' ubiquitination and proteasomal degradation. By controlling this ubiquitination, regulates RAC1 signal transduction and downstream biological processes including the organization of the cytoskeleton, cell migration and cell proliferation. Ubiquitination of TIAM1 requires the membrane-associated protein GABARAP which may restrict locally the activity of the complex. The sequence is that of Kelch repeat and BTB domain-containing protein 7 from Homo sapiens (Human).